We begin with the raw amino-acid sequence, 299 residues long: Pyridoxal 5'-phosphate synthase subunit PdxS (299 aa).

Asp24 contributes to the D-ribose 5-phosphate binding site. Lys81 acts as the Schiff-base intermediate with D-ribose 5-phosphate in catalysis. A D-ribose 5-phosphate-binding site is contributed by Gly153. Arg165 is a binding site for D-glyceraldehyde 3-phosphate. D-ribose 5-phosphate is bound by residues Gly219 and 240-241 (GS).

Belongs to the PdxS/SNZ family. As to quaternary structure, in the presence of PdxT, forms a dodecamer of heterodimers.

It carries out the reaction aldehydo-D-ribose 5-phosphate + D-glyceraldehyde 3-phosphate + L-glutamine = pyridoxal 5'-phosphate + L-glutamate + phosphate + 3 H2O + H(+). Its pathway is cofactor biosynthesis; pyridoxal 5'-phosphate biosynthesis. Catalyzes the formation of pyridoxal 5'-phosphate from ribose 5-phosphate (RBP), glyceraldehyde 3-phosphate (G3P) and ammonia. The ammonia is provided by the PdxT subunit. Can also use ribulose 5-phosphate and dihydroxyacetone phosphate as substrates, resulting from enzyme-catalyzed isomerization of RBP and G3P, respectively. This chain is Pyridoxal 5'-phosphate synthase subunit PdxS, found in Methanococcus aeolicus (strain ATCC BAA-1280 / DSM 17508 / OCM 812 / Nankai-3).